The chain runs to 415 residues: Serine hydroxymethyltransferase (415 aa).

Residues Leu117 and 121–123 contribute to the (6S)-5,6,7,8-tetrahydrofolate site; that span reads GHL. N6-(pyridoxal phosphate)lysine is present on Lys226.

The protein belongs to the SHMT family. Homodimer. Pyridoxal 5'-phosphate serves as cofactor.

It is found in the cytoplasm. It catalyses the reaction (6R)-5,10-methylene-5,6,7,8-tetrahydrofolate + glycine + H2O = (6S)-5,6,7,8-tetrahydrofolate + L-serine. It functions in the pathway one-carbon metabolism; tetrahydrofolate interconversion. The protein operates within amino-acid biosynthesis; glycine biosynthesis; glycine from L-serine: step 1/1. Its function is as follows. Catalyzes the reversible interconversion of serine and glycine with tetrahydrofolate (THF) serving as the one-carbon carrier. This reaction serves as the major source of one-carbon groups required for the biosynthesis of purines, thymidylate, methionine, and other important biomolecules. Also exhibits THF-independent aldolase activity toward beta-hydroxyamino acids, producing glycine and aldehydes, via a retro-aldol mechanism. This Dehalococcoides mccartyi (strain ATCC BAA-2100 / JCM 16839 / KCTC 5957 / BAV1) protein is Serine hydroxymethyltransferase.